The following is a 662-amino-acid chain: Fructose-1,6-bisphosphatase class 3 (662 aa).

It belongs to the FBPase class 3 family. Mn(2+) serves as cofactor.

It catalyses the reaction beta-D-fructose 1,6-bisphosphate + H2O = beta-D-fructose 6-phosphate + phosphate. It functions in the pathway carbohydrate biosynthesis; gluconeogenesis. The polypeptide is Fructose-1,6-bisphosphatase class 3 (Clostridium tetani (strain Massachusetts / E88)).